Consider the following 218-residue polypeptide: Imidazole glycerol phosphate synthase subunit HisH (218 aa).

In terms of domain architecture, Glutamine amidotransferase type-1 spans 1–213; the sequence is MTTIIDYGIG…AALPTTEEAG (213 aa). The active-site Nucleophile is cysteine 79. Active-site residues include histidine 188 and glutamate 190.

In terms of assembly, heterodimer of HisH and HisF.

Its subcellular location is the cytoplasm. It catalyses the reaction 5-[(5-phospho-1-deoxy-D-ribulos-1-ylimino)methylamino]-1-(5-phospho-beta-D-ribosyl)imidazole-4-carboxamide + L-glutamine = D-erythro-1-(imidazol-4-yl)glycerol 3-phosphate + 5-amino-1-(5-phospho-beta-D-ribosyl)imidazole-4-carboxamide + L-glutamate + H(+). The catalysed reaction is L-glutamine + H2O = L-glutamate + NH4(+). The protein operates within amino-acid biosynthesis; L-histidine biosynthesis; L-histidine from 5-phospho-alpha-D-ribose 1-diphosphate: step 5/9. IGPS catalyzes the conversion of PRFAR and glutamine to IGP, AICAR and glutamate. The HisH subunit catalyzes the hydrolysis of glutamine to glutamate and ammonia as part of the synthesis of IGP and AICAR. The resulting ammonia molecule is channeled to the active site of HisF. In Salinibacter ruber (strain DSM 13855 / M31), this protein is Imidazole glycerol phosphate synthase subunit HisH.